The chain runs to 200 residues: 3-isopropylmalate dehydratase small subunit (200 aa).

This sequence belongs to the LeuD family. LeuD type 1 subfamily. As to quaternary structure, heterodimer of LeuC and LeuD.

The catalysed reaction is (2R,3S)-3-isopropylmalate = (2S)-2-isopropylmalate. It functions in the pathway amino-acid biosynthesis; L-leucine biosynthesis; L-leucine from 3-methyl-2-oxobutanoate: step 2/4. Functionally, catalyzes the isomerization between 2-isopropylmalate and 3-isopropylmalate, via the formation of 2-isopropylmaleate. This Vibrio cholerae serotype O1 (strain ATCC 39541 / Classical Ogawa 395 / O395) protein is 3-isopropylmalate dehydratase small subunit.